A 185-amino-acid chain; its full sequence is Probable prefoldin subunit 3 (185 aa).

It belongs to the prefoldin subunit alpha family. As to quaternary structure, heterohexamer of two PFD-alpha type and four PFD-beta type subunits.

In terms of biological role, binds specifically to cytosolic chaperonin (c-CPN) and transfers target proteins to it. Binds to nascent polypeptide chain and promotes folding in an environment in which there are many competing pathways for nonnative proteins. This is Probable prefoldin subunit 3 (pfd-3) from Caenorhabditis elegans.